The primary structure comprises 133 residues: Ribosome-binding factor A (133 aa).

This sequence belongs to the RbfA family. As to quaternary structure, monomer. Binds 30S ribosomal subunits, but not 50S ribosomal subunits or 70S ribosomes.

It localises to the cytoplasm. One of several proteins that assist in the late maturation steps of the functional core of the 30S ribosomal subunit. Associates with free 30S ribosomal subunits (but not with 30S subunits that are part of 70S ribosomes or polysomes). Required for efficient processing of 16S rRNA. May interact with the 5'-terminal helix region of 16S rRNA. In Bordetella pertussis (strain Tohama I / ATCC BAA-589 / NCTC 13251), this protein is Ribosome-binding factor A.